Consider the following 116-residue polypeptide: Aspartate 1-decarboxylase (116 aa).

S25 functions as the Schiff-base intermediate with substrate; via pyruvic acid in the catalytic mechanism. S25 is subject to Pyruvic acid (Ser). T57 provides a ligand contact to substrate. Y58 (proton donor) is an active-site residue. 73–75 (GAA) contacts substrate.

Belongs to the PanD family. As to quaternary structure, heterooctamer of four alpha and four beta subunits. Pyruvate is required as a cofactor. Post-translationally, is synthesized initially as an inactive proenzyme, which is activated by self-cleavage at a specific serine bond to produce a beta-subunit with a hydroxyl group at its C-terminus and an alpha-subunit with a pyruvoyl group at its N-terminus.

The protein resides in the cytoplasm. It catalyses the reaction L-aspartate + H(+) = beta-alanine + CO2. Its pathway is cofactor biosynthesis; (R)-pantothenate biosynthesis; beta-alanine from L-aspartate: step 1/1. Functionally, catalyzes the pyruvoyl-dependent decarboxylation of aspartate to produce beta-alanine. In Leptospira borgpetersenii serovar Hardjo-bovis (strain JB197), this protein is Aspartate 1-decarboxylase.